The following is a 130-amino-acid chain: Small ribosomal subunit protein uS9 (130 aa).

It belongs to the universal ribosomal protein uS9 family.

The sequence is that of Small ribosomal subunit protein uS9 from Cupriavidus taiwanensis (strain DSM 17343 / BCRC 17206 / CCUG 44338 / CIP 107171 / LMG 19424 / R1) (Ralstonia taiwanensis (strain LMG 19424)).